An 87-amino-acid polypeptide reads, in one-letter code: MDKIRKQEIIAKHARHEGDTGSPEVQIALLTERINSLTDHLRTHKKDHHSRRGLLMMVGQRRGLLNYLYEQDIERYRAIIKELGLRR.

This sequence belongs to the universal ribosomal protein uS15 family. In terms of assembly, part of the 30S ribosomal subunit. Forms a bridge to the 50S subunit in the 70S ribosome, contacting the 23S rRNA.

Functionally, one of the primary rRNA binding proteins, it binds directly to 16S rRNA where it helps nucleate assembly of the platform of the 30S subunit by binding and bridging several RNA helices of the 16S rRNA. Forms an intersubunit bridge (bridge B4) with the 23S rRNA of the 50S subunit in the ribosome. The polypeptide is Small ribosomal subunit protein uS15 (Clostridium perfringens (strain ATCC 13124 / DSM 756 / JCM 1290 / NCIMB 6125 / NCTC 8237 / Type A)).